A 309-amino-acid chain; its full sequence is ATP synthase gamma chain (309 aa).

Belongs to the ATPase gamma chain family. F-type ATPases have 2 components, CF(1) - the catalytic core - and CF(0) - the membrane proton channel. CF(1) has five subunits: alpha(3), beta(3), gamma(1), delta(1), epsilon(1). CF(0) has three main subunits: a, b and c.

The protein localises to the cell membrane. Functionally, produces ATP from ADP in the presence of a proton gradient across the membrane. The gamma chain is believed to be important in regulating ATPase activity and the flow of protons through the CF(0) complex. The sequence is that of ATP synthase gamma chain from Ligilactobacillus salivarius (strain UCC118) (Lactobacillus salivarius).